The following is a 326-amino-acid chain: Glutaminase 2 (326 aa).

Residues Ser73, Asn125, Glu169, Asn176, Tyr200, Tyr252, and Val270 each contribute to the substrate site.

It belongs to the glutaminase family. In terms of assembly, homotetramer.

The enzyme catalyses L-glutamine + H2O = L-glutamate + NH4(+). The polypeptide is Glutaminase 2 (Bacillus cereus (strain ATCC 14579 / DSM 31 / CCUG 7414 / JCM 2152 / NBRC 15305 / NCIMB 9373 / NCTC 2599 / NRRL B-3711)).